A 106-amino-acid chain; its full sequence is Large ribosomal subunit protein uL24 (106 aa).

The protein belongs to the universal ribosomal protein uL24 family. In terms of assembly, part of the 50S ribosomal subunit.

Functionally, one of two assembly initiator proteins, it binds directly to the 5'-end of the 23S rRNA, where it nucleates assembly of the 50S subunit. Its function is as follows. One of the proteins that surrounds the polypeptide exit tunnel on the outside of the subunit. This chain is Large ribosomal subunit protein uL24, found in Syntrophus aciditrophicus (strain SB).